A 481-amino-acid polypeptide reads, in one-letter code: Argininosuccinate lyase (481 aa).

Residues methionine 1 to glutamate 17 are compositionally biased toward polar residues. A disordered region spans residues methionine 1–tryptophan 25.

The protein belongs to the lyase 1 family. Argininosuccinate lyase subfamily.

It localises to the cytoplasm. The enzyme catalyses 2-(N(omega)-L-arginino)succinate = fumarate + L-arginine. It participates in amino-acid biosynthesis; L-arginine biosynthesis; L-arginine from L-ornithine and carbamoyl phosphate: step 3/3. The sequence is that of Argininosuccinate lyase from Gluconobacter oxydans (strain 621H) (Gluconobacter suboxydans).